Reading from the N-terminus, the 476-residue chain is Casein kinase 1-like protein 7 (476 aa).

The Protein kinase domain occupies 9-278; that stretch reads FKLGKKIGSG…LKRLFRDLFI (270 aa). Residues 15–23 and K38 contribute to the ATP site; that span reads IGSGSFGEL. The active-site Proton acceptor is D128. Disordered regions lie at residues 299 to 324 and 340 to 464; these read GSSSGSSSRTRHHTTAKPGFNADPIE and PGAV…TRED. Over residues 357 to 367 the composition is skewed to basic and acidic residues; it reads PRDRSRSRNSD. Residues 382–422 are compositionally biased toward low complexity; sequence ANSSSRYRASSSRKAVAASSSRPSSAGGPSESRTSSRLVSS. Gly residues predominate over residues 423–432; sequence SGGGGSGSGN.

It belongs to the protein kinase superfamily. CK1 Ser/Thr protein kinase family. Casein kinase I subfamily. Monomer. In terms of processing, autophosphorylated.

Its subcellular location is the cytoplasm. The enzyme catalyses L-seryl-[protein] + ATP = O-phospho-L-seryl-[protein] + ADP + H(+). It catalyses the reaction L-threonyl-[protein] + ATP = O-phospho-L-threonyl-[protein] + ADP + H(+). Casein kinases are operationally defined by their preferential utilization of acidic proteins such as caseins as substrates. It can phosphorylate a large number of proteins. This is Casein kinase 1-like protein 7 from Arabidopsis thaliana (Mouse-ear cress).